A 637-amino-acid polypeptide reads, in one-letter code: MFAVRFDPSQLVEESVEDEAPKKVIPLKRSKSDEEDESSEEETESSEDEEEKEKEEVADEDSMDVDDESSGDDDEEAEEGEVDAASDHPDKHNSVMSRFQQTLALQDKMDSESLVNENEEVNDENIVESHNLERIPQPAKVKESAVAPAAVSQYKSAAWLNTETIHYDSSMVRKFSDFEDQIDPKLLKNIQQNFSTDTFPIQSILLETLLPTLNFSYNITKKNFTRRVGDVLVNASTGSGKTLAYSIPILQILSKRTVNKLRALVIVPTKLLINQVYETFNNLAQGTSLIVSISKLENSLKEENKKLLQNEPDILITTPGRLVDHLQSGAVNLRNLKFLVLDEADRLLNQSFQNWCNELLNKLKTDKQDHMPGNIVKMVFSATLTTNTEKLHGLQFYNPKLFVMDSVKLYHLPRMLQEYNLHIPTAKTSYKPLFLLRLLSEINGSKMLVFVKSNESSLRLASLLSIMIEHKLGSQFDINSVNSNNTKAENRRIVNEFASNNNTSKVQVLITTDVMSRGVDINDITDVLNYDVPISSQQYIHRCGRTARAQSKGTAYNMLIGKGERTFWATHIDNDISRDIDGCQPQVWGQHDQQNQKDEGQEEEAQVLPLLTVDPETESIYKECLNSLKEKVDTNRK.

Residues 1-93 (MFAVRFDPSQ…AASDHPDKHN (93 aa)) are disordered. The segment covering 33–84 (DEEDESSEEETESSEDEEEKEKEEVADEDSMDVDDESSGDDDEEAEEGEVDA) has biased composition (acidic residues). The Q motif signature appears at 198–206 (TFPIQSILL). Positions 222–402 (KNFTRRVGDV…GLQFYNPKLF (181 aa)) constitute a Helicase ATP-binding domain. 235 to 242 (ASTGSGKT) is an ATP binding site. The DEAD box signature appears at 342-345 (DEAD). One can recognise a Helicase C-terminal domain in the interval 434–608 (FLLRLLSEIN…EGQEEEAQVL (175 aa)).

The protein belongs to the DEAD box helicase family. DDX51/DBP6 subfamily. As to quaternary structure, associated with pre-ribosomal particles.

The protein localises to the nucleus. The protein resides in the nucleolus. It carries out the reaction ATP + H2O = ADP + phosphate + H(+). Functionally, ATP-binding RNA helicase involved in the biogenesis of 60S ribosomal subunits and is required for the normal formation of 25S and 5.8S rRNAs. The chain is ATP-dependent RNA helicase DBP6 (DBP6) from Vanderwaltozyma polyspora (strain ATCC 22028 / DSM 70294 / BCRC 21397 / CBS 2163 / NBRC 10782 / NRRL Y-8283 / UCD 57-17) (Kluyveromyces polysporus).